A 209-amino-acid chain; its full sequence is Thymidine kinase (209 aa).

ATP-binding positions include 9–16 (AAMNAGKS) and 88–91 (DEAQ). The active-site Proton acceptor is the glutamate 89. The Zn(2+) site is built by cysteine 146, cysteine 148, cysteine 183, and histidine 186.

The protein belongs to the thymidine kinase family. Homotetramer.

It localises to the cytoplasm. It catalyses the reaction thymidine + ATP = dTMP + ADP + H(+). The chain is Thymidine kinase from Legionella pneumophila subsp. pneumophila (strain Philadelphia 1 / ATCC 33152 / DSM 7513).